Consider the following 362-residue polypeptide: G-protein coupled receptor 6 (362 aa).

Residues 1 to 74 are Extracellular-facing; that stretch reads MNASAASLND…PGLLLPAVNP (74 aa). Residues N2, N9, and N51 are each glycosylated (N-linked (GlcNAc...) asparagine). A helical membrane pass occupies residues 75-94; the sequence is WDVLLCVSGTVIAGENALVV. The Cytoplasmic segment spans residues 95–106; the sequence is ALIASTPALRTP. Residues 107–130 traverse the membrane as a helical segment; the sequence is MFVLVGSLATADLLAGCGLILHFV. Topologically, residues 131–142 are extracellular; it reads FQYLVPSETVSL. A helical membrane pass occupies residues 143–164; it reads LTVGFLVASFAASVSSLLAITV. The Cytoplasmic segment spans residues 165-185; it reads DRYLSLYNALTYYSRRTLLGV. The helical transmembrane segment at 186–205 threads the bilayer; that stretch reads HLLLAATWTVSLGLGLLPVL. Topologically, residues 206–230 are extracellular; the sequence is GWNCLAERAACSVVRPLARSHVALL. A helical membrane pass occupies residues 231-249; the sequence is SAAFFMVFGIMLHLYVRIC. Over 250-277 the chain is Cytoplasmic; the sequence is QVVWRHAHQIALQQHCLAPPHLAATRKG. The helical transmembrane segment at 278–304 threads the bilayer; the sequence is VGTLAVVLGTFGASWLPFAIYCVVGSH. The Extracellular portion of the chain corresponds to 305–309; sequence EDPAV. The helical transmembrane segment at 310 to 331 threads the bilayer; sequence YTYATLLPATYNSMINPIIYAF. Topologically, residues 332–362 are cytoplasmic; it reads RNQEIQRALWLLLCGCFQSKVPFRSRSPSEV. C345 carries the S-palmitoyl cysteine lipid modification. Phosphoserine is present on residues S356, S358, and S360.

The protein belongs to the G-protein coupled receptor 1 family.

The protein localises to the cell membrane. Orphan receptor with constitutive G(s) signaling activity that activate cyclic AMP. Promotes neurite outgrowth and blocks myelin inhibition in neurons. This is G-protein coupled receptor 6 (GPR6) from Homo sapiens (Human).